A 306-amino-acid polypeptide reads, in one-letter code: Voltage-dependent anion channel-forming protein RSc3414 (306 aa).

A run of 4 helical transmembrane segments spans residues 28-48 (LFLIFCISLVAMAVHVHWLPI), 50-70 (VNLSTTPFSLIGIALAVFLGF), 213-233 (YSVMIHRTVYFFCAALPFGLV), and 239-259 (FTPVFSVFVAYAFMAHEAIAA).

This sequence belongs to the anion channel-forming bestrophin (TC 1.A.46) family.

It localises to the cell membrane. The sequence is that of Voltage-dependent anion channel-forming protein RSc3414 from Ralstonia nicotianae (strain ATCC BAA-1114 / GMI1000) (Ralstonia solanacearum).